The following is a 469-amino-acid chain: RuvB-like helicase 2 (469 aa).

73–80 (GEPGTGKT) contributes to the ATP binding site.

This sequence belongs to the RuvB family. In terms of assembly, forms homohexameric rings. May form a dodecamer with rvb1 made of two stacked hexameric rings. Component of the chromatin remodeling Ino80 complex. Component of the RNA polymerase II holoenzyme complex.

It localises to the nucleus. The enzyme catalyses ATP + H2O = ADP + phosphate + H(+). Has double-stranded DNA-stimulated ATPase and ATP-dependent DNA helicase (5' to 3') activity suggesting a role in nuclear processes such as recombination and transcription. Its function is as follows. Proposed core component of the chromatin remodeling Ino80 complex which is involved in transcriptional regulation, DNA replication and probably DNA repair. This chain is RuvB-like helicase 2 (rvb2), found in Dictyostelium discoideum (Social amoeba).